We begin with the raw amino-acid sequence, 909 residues long: DNA mismatch repair protein MutS (909 aa).

The span at 275–290 (QKAERPPLSRPEREEQ) shows a compositional bias: basic and acidic residues. Residues 275–295 (QKAERPPLSRPEREEQGSTLF) form a disordered region. 661-668 (GPNMGGKS) serves as a coordination point for ATP.

Belongs to the DNA mismatch repair MutS family.

Its function is as follows. This protein is involved in the repair of mismatches in DNA. It is possible that it carries out the mismatch recognition step. This protein has a weak ATPase activity. The chain is DNA mismatch repair protein MutS from Mesorhizobium japonicum (strain LMG 29417 / CECT 9101 / MAFF 303099) (Mesorhizobium loti (strain MAFF 303099)).